Here is a 366-residue protein sequence, read N- to C-terminus: MKKKVGIVFGGKSAEHEVSLQSAKNIVDAIDSDKYDVYLLGIDKQGNWHVNDRSHYLINEEDPKLISLNKTNEGIAVIPGAEKNQIVTSNSTKSLDQLDVIFPIVHGTLGEDGSLQGMLRMANIPFVGSSVLGSAISMDKDIAKRLLKDAGLKVAKGYAYRSVDKESIHFDSLKEELGLPMFIKPANQGSSVGVHKVENEEQFYSAIKDAFQFDHKLLVEEAIVGREIECAVLGNEKPAASVPGEILPTGDFYSYEAKYIDETGAVLQIPAKLEEPVVDSIQDIALQAFKALNCEGLARVDVFLTDDNEIVINEINTLPGFTKISMYPKLWEESGVSYRELIENLIELAIERNQRDQQLKSSRSDG.

One can recognise an ATP-grasp domain in the interval 144 to 347; the sequence is KRLLKDAGLK…YRELIENLIE (204 aa). 174-229 contributes to the ATP binding site; it reads KEELGLPMFIKPANQGSSVGVHKVENEEQFYSAIKDAFQFDHKLLVEEAIVGREIE. The Mg(2+) site is built by Asp-301, Glu-314, and Asn-316.

The protein belongs to the D-alanine--D-alanine ligase family. It depends on Mg(2+) as a cofactor. Requires Mn(2+) as cofactor.

The protein localises to the cytoplasm. The enzyme catalyses 2 D-alanine + ATP = D-alanyl-D-alanine + ADP + phosphate + H(+). It participates in cell wall biogenesis; peptidoglycan biosynthesis. In terms of biological role, cell wall formation. The chain is D-alanine--D-alanine ligase from Oceanobacillus iheyensis (strain DSM 14371 / CIP 107618 / JCM 11309 / KCTC 3954 / HTE831).